Here is a 255-residue protein sequence, read N- to C-terminus: Tryptophan synthase alpha chain (255 aa).

Catalysis depends on proton acceptor residues Glu-44 and Asp-55.

It belongs to the TrpA family. As to quaternary structure, tetramer of two alpha and two beta chains.

It carries out the reaction (1S,2R)-1-C-(indol-3-yl)glycerol 3-phosphate + L-serine = D-glyceraldehyde 3-phosphate + L-tryptophan + H2O. Its pathway is amino-acid biosynthesis; L-tryptophan biosynthesis; L-tryptophan from chorismate: step 5/5. In terms of biological role, the alpha subunit is responsible for the aldol cleavage of indoleglycerol phosphate to indole and glyceraldehyde 3-phosphate. The polypeptide is Tryptophan synthase alpha chain (Dehalococcoides mccartyi (strain ATCC BAA-2100 / JCM 16839 / KCTC 5957 / BAV1)).